Here is a 193-residue protein sequence, read N- to C-terminus: Ion-translocating oxidoreductase complex subunit A (193 aa).

The next 6 helical transmembrane spans lie at 5-25 (LLLF…FLGL), 47-67 (FVMT…LIPL), 72-92 (LRTL…EMVV), 102-122 (LLGI…VALL), 134-154 (ALYG…FAAI), and 171-191 (AIAL…SGLV).

This sequence belongs to the NqrDE/RnfAE family. In terms of assembly, the complex is composed of six subunits: RsxA, RsxB, RsxC, RsxD, RsxE and RsxG.

The protein localises to the cell inner membrane. Functionally, part of a membrane-bound complex that couples electron transfer with translocation of ions across the membrane. Required to maintain the reduced state of SoxR. This chain is Ion-translocating oxidoreductase complex subunit A, found in Salmonella agona (strain SL483).